Consider the following 80-residue polypeptide: Moroidotoxin A (80 aa).

An N-terminal signal peptide occupies residues 1 to 27 (MAAVKKHLRFALVAAITIALLVAGSVA). Positions 28 to 44 (DESSEDIDNIVIKTPLD) are excised as a propeptide. 3 cysteine pairs are disulfide-bonded: Cys-48–Cys-65, Cys-53–Cys-67, and Cys-61–Cys-76.

Belongs to the gympietide family. In terms of tissue distribution, expressed in trichomes, that are stiff epidermal hairs located on the surface of petioles and leaves. Not expressed in other aerial parts.

The protein resides in the secreted. In terms of biological role, neurotoxin certainly responsible for the defensive, persistent, and painful stings of the giant stinging tree. Inhibits inactivation of Nav1.7/SCN9A sodium channel in sensory neurons by directly interacting with TMEM233, a newly described Nav-interacting protein. Has virtually no effect on Nav1.7/SCN9A function in heterologous expression systems and in neurons that do not express TMEM233. Also weakly but significantly affects Nav1.8/SCN10A. Coexpression of TMEM233 with Nav also confers ExTxA sensitivity to Nav1.1-Nav1.6. On the Nav1.7/SCN9A channel, causes a significant hyperpolarizing shift in the voltage dependence of activation. Its effects on Nav currents are irreversible, with no apparent reduction in activity even after repeated wash steps over 30 minutes. In vivo, induces nocifensive behavior in mice (licking or biting and shaking or lifting of the affected paw) lasting for approximately 1 hour. This chain is Moroidotoxin A, found in Dendrocnide moroides (Gympie stinging tree).